A 466-amino-acid polypeptide reads, in one-letter code: 3-isopropylmalate dehydratase large subunit (466 aa).

Residues cysteine 347, cysteine 407, and cysteine 410 each contribute to the [4Fe-4S] cluster site.

This sequence belongs to the aconitase/IPM isomerase family. LeuC type 1 subfamily. Heterodimer of LeuC and LeuD. The cofactor is [4Fe-4S] cluster.

The enzyme catalyses (2R,3S)-3-isopropylmalate = (2S)-2-isopropylmalate. It participates in amino-acid biosynthesis; L-leucine biosynthesis; L-leucine from 3-methyl-2-oxobutanoate: step 2/4. In terms of biological role, catalyzes the isomerization between 2-isopropylmalate and 3-isopropylmalate, via the formation of 2-isopropylmaleate. In Shewanella loihica (strain ATCC BAA-1088 / PV-4), this protein is 3-isopropylmalate dehydratase large subunit.